A 118-amino-acid polypeptide reads, in one-letter code: Large ribosomal subunit protein bL19 (118 aa).

The protein belongs to the bacterial ribosomal protein bL19 family.

In terms of biological role, this protein is located at the 30S-50S ribosomal subunit interface and may play a role in the structure and function of the aminoacyl-tRNA binding site. In Alcanivorax borkumensis (strain ATCC 700651 / DSM 11573 / NCIMB 13689 / SK2), this protein is Large ribosomal subunit protein bL19.